Here is a 305-residue protein sequence, read N- to C-terminus: Testis-expressed protein 52 (305 aa).

Residues 284–305 (HLSKAQASKSPARKRKRRPGHF) are disordered. Residues 294–305 (PARKRKRRPGHF) show a composition bias toward basic residues.

In terms of tissue distribution, expressed in Testis.

The protein is Testis-expressed protein 52 of Homo sapiens (Human).